A 544-amino-acid polypeptide reads, in one-letter code: CTP synthase (544 aa).

Residues 1-265 form an amidoligase domain region; the sequence is MTKFIFVTGG…DNIITEQLQL (265 aa). Residue serine 13 coordinates CTP. Serine 13 is a UTP binding site. Residues 14 to 19 and aspartate 71 contribute to the ATP site; that span reads SLGKGI. Residues aspartate 71 and glutamate 139 each coordinate Mg(2+). CTP is bound by residues 146 to 148, 186 to 191, and lysine 222; these read DIE and KTKPTQ. UTP is bound by residues 186-191 and lysine 222; that span reads KTKPTQ. One can recognise a Glutamine amidotransferase type-1 domain in the interval 290–544; it reads KIAMVGKYVD…VKAALNNKKA (255 aa). Glycine 353 provides a ligand contact to L-glutamine. Residue cysteine 380 is the Nucleophile; for glutamine hydrolysis of the active site. Residues 381 to 384, glutamate 404, and arginine 471 contribute to the L-glutamine site; that span reads LGMQ. Residues histidine 517 and glutamate 519 contribute to the active site.

It belongs to the CTP synthase family. In terms of assembly, homotetramer.

It carries out the reaction UTP + L-glutamine + ATP + H2O = CTP + L-glutamate + ADP + phosphate + 2 H(+). The catalysed reaction is L-glutamine + H2O = L-glutamate + NH4(+). It catalyses the reaction UTP + NH4(+) + ATP = CTP + ADP + phosphate + 2 H(+). The protein operates within pyrimidine metabolism; CTP biosynthesis via de novo pathway; CTP from UDP: step 2/2. With respect to regulation, allosterically activated by GTP, when glutamine is the substrate; GTP has no effect on the reaction when ammonia is the substrate. The allosteric effector GTP functions by stabilizing the protein conformation that binds the tetrahedral intermediate(s) formed during glutamine hydrolysis. Inhibited by the product CTP, via allosteric rather than competitive inhibition. Functionally, catalyzes the ATP-dependent amination of UTP to CTP with either L-glutamine or ammonia as the source of nitrogen. Regulates intracellular CTP levels through interactions with the four ribonucleotide triphosphates. The sequence is that of CTP synthase from Neisseria meningitidis serogroup C (strain 053442).